A 212-amino-acid polypeptide reads, in one-letter code: Protein-L-isoaspartate O-methyltransferase (212 aa).

The active site involves Ser60.

Belongs to the methyltransferase superfamily. L-isoaspartyl/D-aspartyl protein methyltransferase family.

The protein localises to the cytoplasm. The enzyme catalyses [protein]-L-isoaspartate + S-adenosyl-L-methionine = [protein]-L-isoaspartate alpha-methyl ester + S-adenosyl-L-homocysteine. In terms of biological role, catalyzes the methyl esterification of L-isoaspartyl residues in peptides and proteins that result from spontaneous decomposition of normal L-aspartyl and L-asparaginyl residues. It plays a role in the repair and/or degradation of damaged proteins. The sequence is that of Protein-L-isoaspartate O-methyltransferase from Pseudomonas putida (strain W619).